Reading from the N-terminus, the 264-residue chain is Ribonuclease HII (264 aa).

Residues 69 to 263 (KVVCGIDEVG…EENAKTITKP (195 aa)) enclose the RNase H type-2 domain. The a divalent metal cation site is built by Asp-75, Glu-76, and Asp-166.

It belongs to the RNase HII family. Mn(2+) serves as cofactor. It depends on Mg(2+) as a cofactor.

The protein localises to the cytoplasm. The enzyme catalyses Endonucleolytic cleavage to 5'-phosphomonoester.. Its function is as follows. Endonuclease that specifically degrades the RNA of RNA-DNA hybrids. In Macrococcus caseolyticus (strain JCSC5402) (Macrococcoides caseolyticum), this protein is Ribonuclease HII.